A 1291-amino-acid chain; its full sequence is Histone-lysine N-methyltransferase SETDB1 (1291 aa).

The stretch at Glu-18–Leu-64 forms a coiled coil. Positions Arg-108–Asp-147 are disordered. Phosphoserine occurs at positions 112 and 117. Thr-120 is modified (phosphothreonine). Residues Glu-124–Leu-133 show a composition bias toward acidic residues. Lys-182 participates in a covalent cross-link: Glycyl lysine isopeptide (Lys-Gly) (interchain with G-Cter in SUMO2); alternate. A Glycyl lysine isopeptide (Lys-Gly) (interchain with G-Cter in ubiquitin); alternate cross-link involves residue Lys-182. 2 Tudor domains span residues Lys-257–Thr-320 and Leu-347–Thr-403. The interval Ser-404–Pro-545 is disordered. Residues Gln-433–Gln-444 show a composition bias toward polar residues. Pro residues predominate over residues Val-448 to Ser-468. The span at Glu-477–Val-515 shows a compositional bias: polar residues. Over residues Ser-528 to Pro-539 the composition is skewed to low complexity. The MBD domain maps to Tyr-594–Leu-665. The Pre-SET domain maps to Val-727–Gly-800. The Zn(2+) site is built by Cys-729, Cys-731, Cys-735, Cys-741, Cys-743, Cys-781, Cys-785, Cys-787, and Cys-792. Residues Val-803–Asn-1266 enclose the SET domain. Residues Lys-813–Trp-815, Asp-851, and Tyr-853 contribute to the S-adenosyl-L-methionine site. Lys-867 participates in a covalent cross-link: Glycyl lysine isopeptide (Lys-Gly) (interchain with G-Cter in ubiquitin). The tract at residues Glu-868–Ala-1160 is disordered. Over residues Glu-896–Asp-907 the composition is skewed to acidic residues. The span at Asp-951 to Ile-963 shows a compositional bias: pro residues. Ser-1025 carries the post-translational modification Phosphoserine. The segment covering Ile-1031–Lys-1050 has biased composition (basic and acidic residues). Lys-1032 is covalently cross-linked (Glycyl lysine isopeptide (Lys-Gly) (interchain with G-Cter in SUMO2); alternate). Residue Lys-1032 forms a Glycyl lysine isopeptide (Lys-Gly) (interchain with G-Cter in SUMO1); alternate linkage. A Glycyl lysine isopeptide (Lys-Gly) (interchain with G-Cter in SUMO2) cross-link involves residue Lys-1038. Residues Ser-1052 to Tyr-1063 are compositionally biased toward polar residues. Ser-1066 carries the phosphoserine modification. A Glycyl lysine isopeptide (Lys-Gly) (interchain with G-Cter in SUMO2) cross-link involves residue Lys-1069. Residues Leu-1100 to Ser-1115 show a composition bias toward low complexity. Over residues Arg-1116–Ser-1140 the composition is skewed to polar residues. A Glycyl lysine isopeptide (Lys-Gly) (interchain with G-Cter in SUMO2) cross-link involves residue Lys-1149. An N6,N6,N6-trimethyllysine; alternate mark is found at Lys-1170 and Lys-1178. An N6,N6-dimethyllysine; alternate mark is found at Lys-1170 and Lys-1178. S-adenosyl-L-methionine-binding positions include Arg-1220 and Asn-1223–His-1224. 4 residues coordinate Zn(2+): Cys-1226, Cys-1279, Cys-1281, and Cys-1286. Positions Lys-1275 to Leu-1291 constitute a Post-SET domain.

The protein belongs to the class V-like SAM-binding methyltransferase superfamily. Histone-lysine methyltransferase family. Suvar3-9 subfamily. In terms of assembly, part of a complex containing at least CDYL, REST, WIZ, SETDB1, EHMT1 and EHMT2. Forms a complex with ATRX, TRIM28 and ZNF274. Probably part of a corepressor complex containing ZNF304, TRIM28, SETDB1 and DNMT1. Interacts with TRIM28/TIF1B. Interacts with ATF7IP and ATF7IP2; the interaction with ATF7IP protects SETDB1 from proteasomal degradation and is required to stimulate histone methyltransferase activity and facilitate the conversion of dimethylated to trimethylated H3 'Lys-9'. Interacts with CBX1 and CBX5. Interacts with DNMT3A and DNMT3B. Interacts with SUMO2. Interacts with MPHOSPH8. Interacts with ERG. Interacts with HDAC1, HDAC2, SIN3A and SIN3B. Interacts with ATRX. Interacts with RESF1. Interacts with ZNF638. Interacts with TASOR. Interacts with ZNF263; recruited to the SIX3 promoter along with other proteins involved in chromatin modification and transcriptional corepression where it contributes to transcriptional repression. Interacts with PHF13; the interaction probably enhances SETDB1 chromatin-associated levels and activity. Interacts with VRK1. Post-translationally, degraded by the proteasome, shielded by interaction with ATF7IP. In terms of processing, monoubiquitinated at Lys-867 by E2 enzymes of the UBE2E family. The conjugated-Ub is protected from deubiquitination by the SET domain. Monoubiquitination at Lys-867 is required for catalytic activity, H3K9 methylation and endogenous retrovirus silencing. As to expression, widely expressed. High expression in testis.

It localises to the nucleus. The protein resides in the cytoplasm. Its subcellular location is the chromosome. The catalysed reaction is N(6),N(6)-dimethyl-L-lysyl(9)-[histone H3] + S-adenosyl-L-methionine = N(6),N(6),N(6)-trimethyl-L-lysyl(9)-[histone H3] + S-adenosyl-L-homocysteine + H(+). Functionally, histone methyltransferase that specifically trimethylates 'Lys-9' of histone H3. H3 'Lys-9' trimethylation represents a specific tag for epigenetic transcriptional repression by recruiting HP1 (CBX1, CBX3 and/or CBX5) proteins to methylated histones. Mainly functions in euchromatin regions, thereby playing a central role in the silencing of euchromatic genes. H3 'Lys-9' trimethylation is coordinated with DNA methylation. Required for HUSH-mediated heterochromatin formation and gene silencing. Forms a complex with MBD1 and ATF7IP that represses transcription and couples DNA methylation and histone 'Lys-9' trimethylation. Its activity is dependent on MBD1 and is heritably maintained through DNA replication by being recruited by CAF-1. SETDB1 is targeted to histone H3 by TRIM28/TIF1B, a factor recruited by KRAB zinc-finger proteins. Probably forms a corepressor complex required for activated KRAS-mediated promoter hypermethylation and transcriptional silencing of tumor suppressor genes (TSGs) or other tumor-related genes in colorectal cancer (CRC) cells. Required to maintain a transcriptionally repressive state of genes in undifferentiated embryonic stem cells (ESCs). In ESCs, in collaboration with TRIM28, is also required for H3K9me3 and silencing of endogenous and introduced retroviruses in a DNA-methylation independent-pathway. Associates at promoter regions of tumor suppressor genes (TSGs) leading to their gene silencing. The SETDB1-TRIM28-ZNF274 complex may play a role in recruiting ATRX to the 3'-exons of zinc-finger coding genes with atypical chromatin signatures to establish or maintain/protect H3K9me3 at these transcriptionally active regions. The polypeptide is Histone-lysine N-methyltransferase SETDB1 (Homo sapiens (Human)).